Consider the following 45-residue polypeptide: Enterotoxin (45 aa).

One of 3 components (of 35, 45 and 105 kDa) of the enterotoxin.

Its function is as follows. One of 3 components required for cytotoxicity (tested in African green monkey Vero cells); the complex is not hemolytic. This is Enterotoxin from Bacillus cereus.